The primary structure comprises 267 residues: Deoxyribose-phosphate aldolase (267 aa).

D123 functions as the Proton donor/acceptor in the catalytic mechanism. K185 (schiff-base intermediate with acetaldehyde) is an active-site residue. K217 functions as the Proton donor/acceptor in the catalytic mechanism.

It belongs to the DeoC/FbaB aldolase family. DeoC type 1 subfamily.

The protein localises to the cytoplasm. It catalyses the reaction 2-deoxy-D-ribose 5-phosphate = D-glyceraldehyde 3-phosphate + acetaldehyde. It participates in carbohydrate degradation; 2-deoxy-D-ribose 1-phosphate degradation; D-glyceraldehyde 3-phosphate and acetaldehyde from 2-deoxy-alpha-D-ribose 1-phosphate: step 2/2. Its function is as follows. Catalyzes a reversible aldol reaction between acetaldehyde and D-glyceraldehyde 3-phosphate to generate 2-deoxy-D-ribose 5-phosphate. This Coccidioides immitis (strain RS) (Valley fever fungus) protein is Deoxyribose-phosphate aldolase.